Reading from the N-terminus, the 801-residue chain is Phosphatidylinositol 4-kinase beta (801 aa).

3 disordered regions span residues 1–29 (MGDT…GGSL), 101–121 (EDEM…RRRQ), and 250–304 (RKRE…EDEP). Residue Gly-2 is modified to N-acetylglycine. Positions 2–68 (GDTAVEPAPL…VRLLHGAVAV (67 aa)) are interaction with ACBD3. The PIK helical domain maps to 29-242 (LLSVITEGVG…GTKLRKLILS (214 aa)). Ser-258 carries the phosphoserine modification. Residues 259-268 (PALNTGLSPS) are compositionally biased toward polar residues. Thr-263 is subject to Phosphothreonine. Phosphoserine occurs at positions 266, 275, 277, 284, 294, and 413. The segment covering 278 to 294 (DATASISLSSSLKRTAS) has biased composition (low complexity). Thr-423 is subject to Phosphothreonine. Residue Ser-496 is modified to Phosphoserine. Phosphothreonine is present on residues Thr-502 and Thr-504. Residues 520 to 786 (EPWQEKVRRI…MVDGSMRSIT (267 aa)) form the PI3K/PI4K catalytic domain. The tract at residues 526–532 (VRRIREG) is G-loop. Residues 653-661 (QVKDRHNGN) form a catalytic loop region. The activation loop stretch occupies residues 672-696 (HIDFGFILSSSPRNLGFETSAFKLT).

It belongs to the PI3/PI4-kinase family. Type III PI4K subfamily. Interacts with ARF1 and ARF3 in the Golgi complex, but not with ARF4, ARF5 or ARF6. Interacts with NCS1/FREQ in a calcium-independent manner. Interacts with CALN1/CABP8 and CALN2/CABP7; in a calcium-dependent manner; this interaction competes with NCS1/FREQ binding. Interacts with ACBD3. Interacts with ARMH3, YWHAB, YWHAE, YWHAG, YWHAH, YWHAQ, YWHAZ and SFN. Interacts with GGA2 (via VHS domain); the interaction is important for PI4KB location at the Golgi apparatus membrane. Interacts with ATG9A. Mg(2+) serves as cofactor. Mn(2+) is required as a cofactor.

Its subcellular location is the endomembrane system. The protein resides in the mitochondrion outer membrane. It localises to the rough endoplasmic reticulum membrane. The protein localises to the golgi apparatus. It is found in the golgi apparatus membrane. The catalysed reaction is a 1,2-diacyl-sn-glycero-3-phospho-(1D-myo-inositol) + ATP = a 1,2-diacyl-sn-glycero-3-phospho-(1D-myo-inositol 4-phosphate) + ADP + H(+). With respect to regulation, inhibited by wortmannin. Increased kinase activity upon interaction with NCS1/FREQ. In terms of biological role, phosphorylates phosphatidylinositol (PI) in the first committed step in the production of the second messenger inositol-1,4,5,-trisphosphate (PIP). May regulate Golgi disintegration/reorganization during mitosis, possibly via its phosphorylation. Involved in Golgi-to-plasma membrane trafficking. May play an important role in the inner ear development. This chain is Phosphatidylinositol 4-kinase beta (PI4KB), found in Sorex araneus (Eurasian common shrew).